The primary structure comprises 229 residues: Adenylate kinase (229 aa).

10 to 15 (GSGKGT) is an ATP binding site. The NMP stretch occupies residues 30–59 (ESGVIFREHISKGTELGKQAKSYIDKGELV). Residues Ser-31, Arg-36, 57-59 (ELV), 84-87 (GFPR), and Gln-91 each bind AMP. Residues 125-164 (GRRICKTNNNHPNNVSIDSIKPDGNNCRVCHGELIVRTDD) form an LID region. Arg-126 serves as a coordination point for ATP. Positions 161 and 173 each coordinate AMP. Asn-209 contributes to the ATP binding site.

Belongs to the adenylate kinase family. In terms of assembly, monomer.

Its subcellular location is the cytoplasm. It catalyses the reaction AMP + ATP = 2 ADP. It participates in purine metabolism; AMP biosynthesis via salvage pathway; AMP from ADP: step 1/1. Functionally, catalyzes the reversible transfer of the terminal phosphate group between ATP and AMP. Plays an important role in cellular energy homeostasis and in adenine nucleotide metabolism. This Lawsonia intracellularis (strain PHE/MN1-00) protein is Adenylate kinase.